The primary structure comprises 105 residues: Large ribosomal subunit protein uL24 (105 aa).

It belongs to the universal ribosomal protein uL24 family. Part of the 50S ribosomal subunit.

In terms of biological role, one of two assembly initiator proteins, it binds directly to the 5'-end of the 23S rRNA, where it nucleates assembly of the 50S subunit. Its function is as follows. One of the proteins that surrounds the polypeptide exit tunnel on the outside of the subunit. This is Large ribosomal subunit protein uL24 from Wolbachia sp. subsp. Brugia malayi (strain TRS).